The chain runs to 192 residues: Transmembrane protein 276 (192 aa).

The first 32 residues, 1–32 (MVSKPRTEWSTVLSHLVLAGVSLHAAVSSVQS), serve as a signal peptide directing secretion. 4 consecutive transmembrane segments (helical) span residues 35–55 (GAAA…APGP), 63–83 (AGAW…FHWV), 92–112 (LLLG…PEGC), and 114–134 (VAGQ…AVFT).

The protein localises to the membrane. The chain is Transmembrane protein 276 from Mus musculus (Mouse).